Here is an 895-residue protein sequence, read N- to C-terminus: Iron-regulated surface determinant protein H (895 aa).

Residues 1–40 form the signal peptide; that stretch reads MNKHHPKLRSFYSIRKSILGVASVIVSTLFLITSQHQAQA. A disordered region spans residues 42 to 84; it reads ENTNTSDKISENQNNNATTTQPPKDTNQTQPATQPANTAKTYP. Residues 53 to 62 are compositionally biased toward low complexity; the sequence is NQNNNATTTQ. A compositionally biased stretch (polar residues) spans 63-81; sequence PPKDTNQTQPATQPANTAK. Residues 105–232 form the NEAT 1 domain; that stretch reads DIGPREQVNF…IYNDPSLVKS (128 aa). The tract at residues 239–324 is disordered; the sequence is VTNDQSSSDA…NQSDVNQQYP (86 aa). Residues 240-276 show a composition bias toward low complexity; it reads TNDQSSSDASNQTNTNTSNQNTSTINNANNQPQATTN. A compositionally biased stretch (polar residues) spans 277–323; that stretch reads MSQPAQPKSSANADQASSQPAHETNSNGNTNDKTNESSNQSDVNQQY. 2 NEAT domains span residues 345–471 and 543–660; these read TADN…DYVD and QLTD…TKDD. Disordered stretches follow at residues 657–705, 752–782, and 841–868; these read TKDD…KADV, IAKDTDRNVDKGADNSVGMSSNVDTDKDSNK, and KTKEKAGTPSKENKLSQSKMLPKTGETT. 2 stretches are compositionally biased toward polar residues: residues 663–677 and 687–697; these read SQNNTSEPLNVQTGQ and AENSSTATNPK. Basic and acidic residues-rich tracts occupy residues 752–764 and 841–854; these read IAKDTDRNVDKGA and KTKEKAGTPSKENK. The span at 855 to 868 shows a compositional bias: polar residues; sequence LSQSKMLPKTGETT. Positions 861–865 match the LPXTG sorting signal motif; that stretch reads LPKTG. Position 864 is a pentaglycyl murein peptidoglycan amidated threonine (threonine 864). Positions 865-895 are cleaved as a propeptide — removed by sortase; that stretch reads GETTSSQSWWGLYALLGMLALFIPKFRKESK.

It belongs to the IsdH family.

The protein resides in the secreted. Its subcellular location is the cell wall. Functionally, binds human plasma haptoglobin-hemoglobin complexes, haptoglobin and hemoglobin. Binds haptoglobin-hemoglobin complexes with significantly higher affinity than haptoglobin alone. This Staphylococcus aureus (strain MSSA476) protein is Iron-regulated surface determinant protein H (isdH).